A 196-amino-acid polypeptide reads, in one-letter code: GTP cyclohydrolase-2 (196 aa).

Position 49 to 53 (Arg49 to Glu53) interacts with GTP. 3 residues coordinate Zn(2+): Cys54, Cys65, and Cys67. GTP is bound by residues Gln70, Glu92–Arg94, and Thr114. Asp126 serves as the catalytic Proton acceptor. Arg128 functions as the Nucleophile in the catalytic mechanism. The GTP site is built by Thr149 and Lys154.

Belongs to the GTP cyclohydrolase II family. As to quaternary structure, homodimer. Requires Zn(2+) as cofactor.

It catalyses the reaction GTP + 4 H2O = 2,5-diamino-6-hydroxy-4-(5-phosphoribosylamino)-pyrimidine + formate + 2 phosphate + 3 H(+). It functions in the pathway cofactor biosynthesis; riboflavin biosynthesis; 5-amino-6-(D-ribitylamino)uracil from GTP: step 1/4. Its function is as follows. Catalyzes the conversion of GTP to 2,5-diamino-6-ribosylamino-4(3H)-pyrimidinone 5'-phosphate (DARP), formate and pyrophosphate. The polypeptide is GTP cyclohydrolase-2 (Yersinia pestis).